The chain runs to 287 residues: Glutamate racemase (287 aa).

A compositionally biased stretch (polar residues) spans 1–15; it reads MATKPQDANTTSREA. Residues 1 to 25 are disordered; that stretch reads MATKPQDANTTSREAITSKADSPPR. Residues 32–33 and 64–65 contribute to the substrate site; these read DS and YG. The Proton donor/acceptor role is filled by cysteine 96. 97–98 provides a ligand contact to substrate; it reads NT. Catalysis depends on cysteine 208, which acts as the Proton donor/acceptor. 209–210 provides a ligand contact to substrate; sequence TH.

The protein belongs to the aspartate/glutamate racemases family.

It catalyses the reaction L-glutamate = D-glutamate. Its pathway is cell wall biogenesis; peptidoglycan biosynthesis. Its function is as follows. Provides the (R)-glutamate required for cell wall biosynthesis. This Yersinia pseudotuberculosis serotype O:3 (strain YPIII) protein is Glutamate racemase.